Reading from the N-terminus, the 315-residue chain is Porphobilinogen deaminase (315 aa).

Cysteine 238 is subject to S-(dipyrrolylmethanemethyl)cysteine.

The protein belongs to the HMBS family. In terms of assembly, monomer. It depends on dipyrromethane as a cofactor.

It catalyses the reaction 4 porphobilinogen + H2O = hydroxymethylbilane + 4 NH4(+). The protein operates within porphyrin-containing compound metabolism; protoporphyrin-IX biosynthesis; coproporphyrinogen-III from 5-aminolevulinate: step 2/4. In terms of biological role, tetrapolymerization of the monopyrrole PBG into the hydroxymethylbilane pre-uroporphyrinogen in several discrete steps. In Albidiferax ferrireducens (strain ATCC BAA-621 / DSM 15236 / T118) (Rhodoferax ferrireducens), this protein is Porphobilinogen deaminase.